The sequence spans 466 residues: Alpha-galacturonidase (466 aa).

Residue 11 to 78 (VKIAYIGGGS…GKWNYETANT (68 aa)) coordinates NAD(+). A substrate-binding site is contributed by asparagine 157. Cysteine 179 contacts Mn(2+). The Proton donor role is filled by histidine 180. Histidine 216 is a binding site for Mn(2+).

It belongs to the glycosyl hydrolase 4 family. As to quaternary structure, homotetramer. NAD(+) is required as a cofactor. The cofactor is Mn(2+).

It catalyses the reaction [(1-&gt;4)-alpha-D-galacturonosyl](n) + H2O = alpha-D-galacturonate + [(1-&gt;4)-alpha-D-galacturonosyl](n-1). Functionally, alpha-galacturonidase able to catalyze the hydrolysis of the chromogenic substrate p-nitrophenyl-alpha-D-galacturonic acid (pNPalphaGalUA). It is probable that alpha-1,4-di-galacturonate (GalUA(2)) is the naturally occurring substrate. The polypeptide is Alpha-galacturonidase (Lachnoclostridium phytofermentans (strain ATCC 700394 / DSM 18823 / ISDg) (Clostridium phytofermentans)).